A 463-amino-acid chain; its full sequence is Asparagine--tRNA ligase (463 aa).

Belongs to the class-II aminoacyl-tRNA synthetase family. As to quaternary structure, homodimer.

The protein resides in the cytoplasm. It carries out the reaction tRNA(Asn) + L-asparagine + ATP = L-asparaginyl-tRNA(Asn) + AMP + diphosphate + H(+). This chain is Asparagine--tRNA ligase, found in Acholeplasma laidlawii (strain PG-8A).